A 317-amino-acid polypeptide reads, in one-letter code: Tyrosine--tRNA ligase (317 aa).

Tyr33 serves as a coordination point for L-tyrosine. The short motif at Pro38–His46 is the 'HIGH' region element. Residues Tyr155, Gln159, Asp162, and Gln177 each contribute to the L-tyrosine site. A 'KMSKS' region motif is present at residues Lys211 to Ser215. Ser214 is an ATP binding site.

The protein belongs to the class-I aminoacyl-tRNA synthetase family. TyrS type 3 subfamily. As to quaternary structure, homodimer.

The protein resides in the cytoplasm. It catalyses the reaction tRNA(Tyr) + L-tyrosine + ATP = L-tyrosyl-tRNA(Tyr) + AMP + diphosphate + H(+). In terms of biological role, catalyzes the attachment of tyrosine to tRNA(Tyr) in a two-step reaction: tyrosine is first activated by ATP to form Tyr-AMP and then transferred to the acceptor end of tRNA(Tyr). The protein is Tyrosine--tRNA ligase of Methanosarcina mazei (strain ATCC BAA-159 / DSM 3647 / Goe1 / Go1 / JCM 11833 / OCM 88) (Methanosarcina frisia).